The chain runs to 367 residues: Germination protease (367 aa).

The propeptide occupies 1–15; that stretch reads MKEPLDLSKYSIRTD.

Belongs to the peptidase A25 family. Homotetramer. Autoproteolytically processed. The inactive tetrameric zymogen termed p46 autoprocesses to a smaller form termed p41, which is active only during spore germination.

The enzyme catalyses Endopeptidase action with P4 Glu or Asp, P1 preferably Glu &gt; Asp, P1' hydrophobic and P2' Ala.. Functionally, initiates the rapid degradation of small, acid-soluble proteins during spore germination. The polypeptide is Germination protease (Bacillus cereus (strain ATCC 14579 / DSM 31 / CCUG 7414 / JCM 2152 / NBRC 15305 / NCIMB 9373 / NCTC 2599 / NRRL B-3711)).